The following is a 118-amino-acid chain: UPF0134 protein MPN_287 (118 aa).

This sequence belongs to the UPF0134 family.

This is UPF0134 protein MPN_287 from Mycoplasma pneumoniae (strain ATCC 29342 / M129 / Subtype 1) (Mycoplasmoides pneumoniae).